We begin with the raw amino-acid sequence, 362 residues long: B3 domain-containing protein IDEF1 (362 aa).

The tract at residues 30–91 (VPFPNPFPAP…TPTPTPRGFA (62 aa)) is disordered. Over residues 48–70 (PHNHNHNHNHNHNIHNSHNHNHN) the composition is skewed to basic residues. Residues 253 to 355 (LRKELTKSDV…KFIIRGEKAI (103 aa)) constitute a DNA-binding region (TF-B3).

Polyubiquitinated. Ubiquitination leads to its subsequent degradation via the proteasome pathway. In terms of tissue distribution, expressed in roots.

The protein localises to the nucleus. Transcription regulator involved in iron deficiency response and tolerance. May regulate directly iron transporters or other transcription factors involved in iron-deficiency response. Binds specifically to the DNA sequence 5'-CATGC-3' of the IDE1 element found in the promoter of the barley iron deficiency-inducible gene IDS2. In Oryza sativa subsp. japonica (Rice), this protein is B3 domain-containing protein IDEF1 (IDEF1).